The chain runs to 267 residues: Mediator of RNA polymerase II transcription subunit 8 (267 aa).

Coiled coils occupy residues 2-27 (QQRE…KGSL) and 118-163 (VEEQ…EDRD). The span at 156 to 165 (NNPREDRDSE) shows a compositional bias: basic and acidic residues. Disordered stretches follow at residues 156–180 (NNPR…NPAD) and 227–267 (ASGH…PYNR). Positions 166 to 180 (TSALRQNKPSFNPAD) are enriched in polar residues. Positions 236–247 (GPVAPQQPGQPG) are enriched in low complexity.

Belongs to the Mediator complex subunit 8 family. In terms of assembly, component of the Mediator complex. May be part of a multisubunit E3 ubiquitin-protein ligase complex.

It is found in the nucleus. It participates in protein modification; protein ubiquitination. Component of the Mediator complex, a coactivator involved in the regulated transcription of nearly all RNA polymerase II-dependent genes. Mediator functions as a bridge to convey information from gene-specific regulatory proteins to the basal RNA polymerase II transcription machinery. Mediator is recruited to promoters by direct interactions with regulatory proteins and serves as a scaffold for the assembly of a functional preinitiation complex with RNA polymerase II and the general transcription factors. May play a role as a target recruitment subunit in E3 ubiquitin-protein ligase complexes and thus in ubiquitination and subsequent proteasomal degradation of target proteins. The polypeptide is Mediator of RNA polymerase II transcription subunit 8 (med8) (Danio rerio (Zebrafish)).